A 317-amino-acid polypeptide reads, in one-letter code: Eukaryotic translation initiation factor 2 subunit 2 (317 aa).

Positions M1–G146 are disordered. A compositionally biased stretch (basic and acidic residues) spans A79–D90. Over residues K109 to P125 the composition is skewed to low complexity. The C4-type zinc finger occupies H222–R246.

It belongs to the eIF-2-beta/eIF-5 family. As to quaternary structure, eukaryotic translation initiation factor 2 eIF2 is a heterotrimeric complex composed of an alpha, a beta and a gamma subunit.

The protein localises to the cytoplasm. It localises to the cytosol. In terms of biological role, component of the eIF2 complex that functions in the early steps of protein synthesis by forming a ternary complex with GTP and initiator tRNA. This complex binds to a 40S ribosomal subunit, followed by mRNA binding to form a 43S pre-initiation complex (43S PIC). Junction of the 60S ribosomal subunit to form the 80S initiation complex is preceded by hydrolysis of the GTP bound to eIF2 and release of an eIF2-GDP binary complex. In order for eIF2 to recycle and catalyze another round of initiation, the GDP bound to eIF2 must exchange with GTP by way of a reaction catalyzed by eIF2B. This is Eukaryotic translation initiation factor 2 subunit 2 (eif2s2) from Dictyostelium discoideum (Social amoeba).